The chain runs to 398 residues: NADH-quinone oxidoreductase subunit D (398 aa).

It belongs to the complex I 49 kDa subunit family. NDH-1 is composed of 14 different subunits. Subunits NuoB, C, D, E, F, and G constitute the peripheral sector of the complex.

Its subcellular location is the cell inner membrane. The enzyme catalyses a quinone + NADH + 5 H(+)(in) = a quinol + NAD(+) + 4 H(+)(out). Its function is as follows. NDH-1 shuttles electrons from NADH, via FMN and iron-sulfur (Fe-S) centers, to quinones in the respiratory chain. The immediate electron acceptor for the enzyme in this species is believed to be ubiquinone. Couples the redox reaction to proton translocation (for every two electrons transferred, four hydrogen ions are translocated across the cytoplasmic membrane), and thus conserves the redox energy in a proton gradient. In Bradyrhizobium sp. (strain BTAi1 / ATCC BAA-1182), this protein is NADH-quinone oxidoreductase subunit D.